Reading from the N-terminus, the 108-residue chain is Large ribosomal subunit protein P1B (108 aa).

The segment covering 72–84 (AGSASGAAAGGEA) has biased composition (low complexity). Residues 72 to 108 (AGSASGAAAGGEAAAEEAAEEEAAEESDDDMGFGLFD) are disordered. Over residues 85 to 102 (AAEEAAEEEAAEESDDDM) the composition is skewed to acidic residues.

This sequence belongs to the eukaryotic ribosomal protein P1/P2 family. In terms of assembly, P1 and P2 exist as dimers at the large ribosomal subunit. Phosphorylated.

Its function is as follows. Plays an important role in the elongation step of protein synthesis. The chain is Large ribosomal subunit protein P1B (RPP1B) from Candida albicans (Yeast).